The following is a 308-amino-acid chain: D-alanine--D-alanine ligase (308 aa).

The region spanning 103–302 (KFVFRAAGLP…YGELVSWMVE (200 aa)) is the ATP-grasp domain. Position 130–184 (130–184 (MDPPYVIKPVSEGSSVGVFIVRAGDNRPPAELTSAEWNLGDEVMAERYIAGRELT)) interacts with ATP. 3 residues coordinate Mg(2+): Asp252, Glu269, and Asn271.

The protein belongs to the D-alanine--D-alanine ligase family. Mg(2+) is required as a cofactor. The cofactor is Mn(2+).

It localises to the cytoplasm. The enzyme catalyses 2 D-alanine + ATP = D-alanyl-D-alanine + ADP + phosphate + H(+). The protein operates within cell wall biogenesis; peptidoglycan biosynthesis. Functionally, cell wall formation. This Parvibaculum lavamentivorans (strain DS-1 / DSM 13023 / NCIMB 13966) protein is D-alanine--D-alanine ligase.